The primary structure comprises 422 residues: uncharacterized protein (422 aa).

A phosphoserine mark is found at serine 124, serine 126, and serine 151. The interval 144–166 is disordered; that stretch reads TNSLNHDSPPSTPPRRPDTSTSK. Residue lysine 250 forms a Glycyl lysine isopeptide (Lys-Gly) (interchain with G-Cter in SUMO2) linkage. Disordered regions lie at residues 251–285 and 299–324; these read ADTT…NDSS and GRGP…ATTA. Over residues 271-282 the composition is skewed to acidic residues; that stretch reads ETDEDLAWDSDN. Phosphoserine occurs at positions 280 and 306. Positions 310 to 324 are enriched in low complexity; that stretch reads ALTVKAKATSSATTA. Serine 351 carries the post-translational modification Phosphoserine.

This is an uncharacterized protein from Homo sapiens (Human).